The following is a 382-amino-acid chain: Bestrophin-6 (382 aa).

Helical transmembrane passes span 29–49 (WKLI…VLAI), 68–88 (FINF…TTIV), 231–251 (LAYP…CAFA), and 265–285 (VIHY…MGWL).

This sequence belongs to the anion channel-forming bestrophin (TC 1.A.46) family. Calcium-sensitive chloride channel subfamily.

It is found in the membrane. The polypeptide is Bestrophin-6 (best-6) (Caenorhabditis elegans).